Reading from the N-terminus, the 201-residue chain is UPF0637 protein LSEI_1198 (201 aa).

It belongs to the UPF0637 family.

In Lacticaseibacillus paracasei (strain ATCC 334 / BCRC 17002 / CCUG 31169 / CIP 107868 / KCTC 3260 / NRRL B-441) (Lactobacillus paracasei), this protein is UPF0637 protein LSEI_1198.